The sequence spans 1069 residues: MVRMAERLAENFIPEANQRNENEPAYSRYKRVGQNRSRLNSRASLGSSMGRRITLIETDSGVIEVESDKQFLDAFKDANMDAVHHLNAASPVTRGLWCMIIIAFVILVLVQCYSQIKLYISEPVATNIEAEYPSKISFPTVAICNNNQFRLTYLTGGRIMNRRSKSISGSLLSTGHDVESVFDTVLRKSWDMDAVKFLRSAAHWKSRMILGCTWPNGTSCKLSDFKAVWTTTGLCWAINTDPHNPYEVTGSGEGHGLRLLLNVESYERVDACTKHFRTKTLPGLKILIYNQTDIPDSSMNGVNVPSGYSMDIPFKMQHRSKLTGVHCIEENDEQIEASTDFNNPENIRTCTLRRYMTEVENSCHCTLRRAYTSNSTDVKMKACNVDQYFGCAQKAMQRIREEGTASTCLPPCKSIDYTAWQDMNRLPQNLMPALIEEQEEDDEDDVEQEELDENVSFSTVSGGETFSCEDSAYLDDKQVMRIKRDAHRAYEMQARHQEDIFLRSRRLIARLRNAINSIERYKWGWHYDTFSGVADRLSNLTCFSNFSERHRDIISILESRPITSEEKKANQMFFLLDETAFNRNATRYMSVGDLKSRYGDKVDDVAEEIAVILRIMEKLWHVFMPDSYIRTMTGDFSRMDRIIELMNQYELNKLQRRAWAEKMQSRQMKHFFEDDFYESYYQPLIKDLDTTLVKQIDEVEADWPKVEYYLQRGSAGKTGAIMFFGDGNKDNRQKFEKLIVEMHECASGKMRKEAGKMLSSFKKSYRELQAAYGKLFKEELPDYLENFQFGNKFVGDNFAMVNIFLHRMNLEVWSQDRTYGFWSLACDIGGALGLFLGASLLTIIEIVYLCIQYGLCGKRARNMKCIPMDALTRQMKKVATCSCCKKPIEKSREPIYKKKSQSYQRRFTADDEDQGDKFRSRASSEESKRRKNIWAQMNDPSGNSTLTPSEIKNFLDQVQRNSQPPSYHDDHHPEDHYYYNDPNYLTISPPSDRPEDNREGSTSGYYSSPRAPPQANPRDESPIPDTEPISVSEFSDALAPPLFKTPPRERRTRKEQKIDEEDDDKHSYV.

At Met1 to Gly95 the chain is on the cytoplasmic side. A helical membrane pass occupies residues Leu96–Ile116. Over Lys117 to Gly830 the chain is Extracellular. Asn216, Asn290, Asn374, Asn454, Asn539, Asn545, and Asn584 each carry an N-linked (GlcNAc...) asparagine glycan. A helical membrane pass occupies residues Ala831–Ile851. Residues Gln852–Val1069 lie on the Cytoplasmic side of the membrane. Disordered stretches follow at residues Lys898 to Pro948 and Arg960 to Val1069. Residues Gly915 to Lys928 show a composition bias toward basic and acidic residues. A compositionally biased stretch (polar residues) spans Asn938–Pro948. Residues Tyr967–Tyr978 show a composition bias toward basic and acidic residues.

This sequence belongs to the amiloride-sensitive sodium channel (TC 1.A.6) family.

It is found in the membrane. The sequence is that of Degenerin-like protein del-10 from Caenorhabditis elegans.